The chain runs to 192 residues: LexA repressor (192 aa).

The segment at residues 15-35 (RAEIARELGFRSANAAEEHLK) is a DNA-binding region (H-T-H motif). Residues Ser-109 and Lys-146 each act as for autocatalytic cleavage activity in the active site.

This sequence belongs to the peptidase S24 family. Homodimer.

It catalyses the reaction Hydrolysis of Ala-|-Gly bond in repressor LexA.. In terms of biological role, represses a number of genes involved in the response to DNA damage (SOS response), including recA and lexA. In the presence of single-stranded DNA, RecA interacts with LexA causing an autocatalytic cleavage which disrupts the DNA-binding part of LexA, leading to derepression of the SOS regulon and eventually DNA repair. This is LexA repressor from Photobacterium profundum (strain SS9).